A 453-amino-acid polypeptide reads, in one-letter code: Bifunctional protein GlmU (453 aa).

The segment at 1–226 (MKFSAVILAA…AIEVEGVNDR (226 aa)) is pyrophosphorylase. Residues 8-11 (LAAG), K22, Q73, 78-79 (GT), 100-102 (YGD), G137, E151, N166, and N224 each bind UDP-N-acetyl-alpha-D-glucosamine. D102 is a binding site for Mg(2+). N224 provides a ligand contact to Mg(2+). Positions 227-247 (AQLARLERAFQSMQAQKLLEQ) are linker. Positions 248–453 (GVMLRDPARF…TGWQRPVKQK (206 aa)) are N-acetyltransferase. UDP-N-acetyl-alpha-D-glucosamine contacts are provided by R330 and K348. The Proton acceptor role is filled by H360. Y363 and N374 together coordinate UDP-N-acetyl-alpha-D-glucosamine. Residues A377, 383 to 384 (NY), S402, A420, and R437 each bind acetyl-CoA.

It in the N-terminal section; belongs to the N-acetylglucosamine-1-phosphate uridyltransferase family. In the C-terminal section; belongs to the transferase hexapeptide repeat family. In terms of assembly, homotrimer. Mg(2+) is required as a cofactor.

It is found in the cytoplasm. It carries out the reaction alpha-D-glucosamine 1-phosphate + acetyl-CoA = N-acetyl-alpha-D-glucosamine 1-phosphate + CoA + H(+). It catalyses the reaction N-acetyl-alpha-D-glucosamine 1-phosphate + UTP + H(+) = UDP-N-acetyl-alpha-D-glucosamine + diphosphate. It participates in nucleotide-sugar biosynthesis; UDP-N-acetyl-alpha-D-glucosamine biosynthesis; N-acetyl-alpha-D-glucosamine 1-phosphate from alpha-D-glucosamine 6-phosphate (route II): step 2/2. It functions in the pathway nucleotide-sugar biosynthesis; UDP-N-acetyl-alpha-D-glucosamine biosynthesis; UDP-N-acetyl-alpha-D-glucosamine from N-acetyl-alpha-D-glucosamine 1-phosphate: step 1/1. Its pathway is bacterial outer membrane biogenesis; LPS lipid A biosynthesis. Functionally, catalyzes the last two sequential reactions in the de novo biosynthetic pathway for UDP-N-acetylglucosamine (UDP-GlcNAc). The C-terminal domain catalyzes the transfer of acetyl group from acetyl coenzyme A to glucosamine-1-phosphate (GlcN-1-P) to produce N-acetylglucosamine-1-phosphate (GlcNAc-1-P), which is converted into UDP-GlcNAc by the transfer of uridine 5-monophosphate (from uridine 5-triphosphate), a reaction catalyzed by the N-terminal domain. The protein is Bifunctional protein GlmU of Vibrio parahaemolyticus serotype O3:K6 (strain RIMD 2210633).